The sequence spans 221 residues: uncharacterized protein (221 aa).

The 44-residue stretch at 20–63 (DFDRAMLDFQAMFPSLSNSHIEYVLRKYDGDVSATINELLYDNT) folds into the CUE domain. A disordered region spans residues 131–194 (EEKKKKSCSD…GPYIGEGEVK (64 aa)). A compositionally biased stretch (low complexity) spans 156 to 166 (KNSKNSKISVN). The segment covering 169–183 (KKLEPRRRSDEDRVP) has biased composition (basic and acidic residues).

This is an uncharacterized protein from Caenorhabditis elegans.